The chain runs to 285 residues: Acetylglutamate kinase (285 aa).

Residues Gly-69–Gly-70, Arg-91, and Asn-183 contribute to the substrate site.

It belongs to the acetylglutamate kinase family. ArgB subfamily.

It localises to the cytoplasm. The enzyme catalyses N-acetyl-L-glutamate + ATP = N-acetyl-L-glutamyl 5-phosphate + ADP. The protein operates within amino-acid biosynthesis; L-arginine biosynthesis; N(2)-acetyl-L-ornithine from L-glutamate: step 2/4. Catalyzes the ATP-dependent phosphorylation of N-acetyl-L-glutamate. The protein is Acetylglutamate kinase of Jannaschia sp. (strain CCS1).